The sequence spans 286 residues: ATP synthase gamma chain (286 aa).

Belongs to the ATPase gamma chain family. In terms of assembly, F-type ATPases have 2 components, CF(1) - the catalytic core - and CF(0) - the membrane proton channel. CF(1) has five subunits: alpha(3), beta(3), gamma(1), delta(1), epsilon(1). CF(0) has three main subunits: a, b and c.

The protein resides in the cell inner membrane. In terms of biological role, produces ATP from ADP in the presence of a proton gradient across the membrane. The gamma chain is believed to be important in regulating ATPase activity and the flow of protons through the CF(0) complex. The sequence is that of ATP synthase gamma chain from Pseudomonas syringae pv. tomato (strain ATCC BAA-871 / DC3000).